Reading from the N-terminus, the 102-residue chain is Large ribosomal subunit protein uL24 (102 aa).

This sequence belongs to the universal ribosomal protein uL24 family. As to quaternary structure, part of the 50S ribosomal subunit.

One of two assembly initiator proteins, it binds directly to the 5'-end of the 23S rRNA, where it nucleates assembly of the 50S subunit. In terms of biological role, one of the proteins that surrounds the polypeptide exit tunnel on the outside of the subunit. This is Large ribosomal subunit protein uL24 from Leuconostoc citreum (strain KM20).